We begin with the raw amino-acid sequence, 643 residues long: 3D-(3,5/4)-trihydroxycyclohexane-1,2-dione hydrolase (643 aa).

Glu-65 contributes to the thiamine diphosphate binding site. Residues 441–521 (SLPGDLQRMW…VNVLLFDNCG (81 aa)) form a thiamine pyrophosphate binding region. The Mg(2+) site is built by Asp-492 and Asn-519.

The protein belongs to the TPP enzyme family. Mg(2+) serves as cofactor. Requires thiamine diphosphate as cofactor.

The enzyme catalyses 3D-3,5/4-trihydroxycyclohexane-1,2-dione + H2O = 5-deoxy-D-glucuronate + H(+). It functions in the pathway polyol metabolism; myo-inositol degradation into acetyl-CoA; acetyl-CoA from myo-inositol: step 3/7. Functionally, involved in the cleavage of the C1-C2 bond of 3D-(3,5/4)-trihydroxycyclohexane-1,2-dione (THcHDO) to yield 5-deoxy-glucuronate (5DG). In Clostridium botulinum (strain Eklund 17B / Type B), this protein is 3D-(3,5/4)-trihydroxycyclohexane-1,2-dione hydrolase.